A 269-amino-acid chain; its full sequence is Tryptophan synthase alpha chain (269 aa).

Catalysis depends on proton acceptor residues Glu49 and Asp60.

The protein belongs to the TrpA family. Tetramer of two alpha and two beta chains.

The catalysed reaction is (1S,2R)-1-C-(indol-3-yl)glycerol 3-phosphate + L-serine = D-glyceraldehyde 3-phosphate + L-tryptophan + H2O. It functions in the pathway amino-acid biosynthesis; L-tryptophan biosynthesis; L-tryptophan from chorismate: step 5/5. The alpha subunit is responsible for the aldol cleavage of indoleglycerol phosphate to indole and glyceraldehyde 3-phosphate. This chain is Tryptophan synthase alpha chain, found in Pseudomonas putida (Arthrobacter siderocapsulatus).